The following is a 235-amino-acid chain: Small ribosomal subunit protein uS2 (235 aa).

This sequence belongs to the universal ribosomal protein uS2 family.

The sequence is that of Small ribosomal subunit protein uS2 from Thermoanaerobacter pseudethanolicus (strain ATCC 33223 / 39E) (Clostridium thermohydrosulfuricum).